Reading from the N-terminus, the 225-residue chain is Cytochrome c oxidase subunit 2 (225 aa).

At 1-25 the chain is on the mitochondrial intermembrane side; the sequence is MSTWMMFMFQESNSFYADNLVSFHN. The helical transmembrane segment at 26 to 47 threads the bilayer; it reads LVMMIIIMISTLTIYIIFDLFM. The Mitochondrial matrix portion of the chain corresponds to 48 to 62; the sequence is NKFSNLFLLKNHNIE. The helical transmembrane segment at 63–82 threads the bilayer; sequence IIWTIVPIVILLIICFPSLK. The Mitochondrial intermembrane portion of the chain corresponds to 83–225; the sequence is ILYLIDEIIN…FFLNWINKQN (143 aa). Residues His-159, Cys-194, Glu-196, Cys-198, His-202, and Met-205 each coordinate Cu cation. Glu-196 contributes to the Mg(2+) binding site.

Belongs to the cytochrome c oxidase subunit 2 family. Component of the cytochrome c oxidase (complex IV, CIV), a multisubunit enzyme composed of a catalytic core of 3 subunits and several supernumerary subunits. The complex exists as a monomer or a dimer and forms supercomplexes (SCs) in the inner mitochondrial membrane with ubiquinol-cytochrome c oxidoreductase (cytochrome b-c1 complex, complex III, CIII). It depends on Cu cation as a cofactor.

The protein localises to the mitochondrion inner membrane. It carries out the reaction 4 Fe(II)-[cytochrome c] + O2 + 8 H(+)(in) = 4 Fe(III)-[cytochrome c] + 2 H2O + 4 H(+)(out). Component of the cytochrome c oxidase, the last enzyme in the mitochondrial electron transport chain which drives oxidative phosphorylation. The respiratory chain contains 3 multisubunit complexes succinate dehydrogenase (complex II, CII), ubiquinol-cytochrome c oxidoreductase (cytochrome b-c1 complex, complex III, CIII) and cytochrome c oxidase (complex IV, CIV), that cooperate to transfer electrons derived from NADH and succinate to molecular oxygen, creating an electrochemical gradient over the inner membrane that drives transmembrane transport and the ATP synthase. Cytochrome c oxidase is the component of the respiratory chain that catalyzes the reduction of oxygen to water. Electrons originating from reduced cytochrome c in the intermembrane space (IMS) are transferred via the dinuclear copper A center (CU(A)) of subunit 2 and heme A of subunit 1 to the active site in subunit 1, a binuclear center (BNC) formed by heme A3 and copper B (CU(B)). The BNC reduces molecular oxygen to 2 water molecules using 4 electrons from cytochrome c in the IMS and 4 protons from the mitochondrial matrix. The sequence is that of Cytochrome c oxidase subunit 2 (COII) from Apis koschevnikovi (Koschevnikov's honey bee).